The following is a 133-amino-acid chain: Small ribosomal subunit protein uS8 (133 aa).

Belongs to the universal ribosomal protein uS8 family. Part of the 30S ribosomal subunit. Contacts proteins S5 and S12.

Its function is as follows. One of the primary rRNA binding proteins, it binds directly to 16S rRNA central domain where it helps coordinate assembly of the platform of the 30S subunit. In Rippkaea orientalis (strain PCC 8801 / RF-1) (Cyanothece sp. (strain PCC 8801)), this protein is Small ribosomal subunit protein uS8.